The sequence spans 182 residues: MTFDSFDIKSLIRPVIDFPKPGVIFRDITPLFQSPRALRLVADSFAQRYVEADFTHIGAMDARGFLIGSIIAYQLNKPLILFRKQGKLPADVLAEGYQTEYGEAFLEVHADSLCEGDSVLMFDDLIATGGTLIAAANLVRRMGAKIFEAAAIIDLPELGGSQRLEEMGIPTFCLTQFALTER.

The protein belongs to the purine/pyrimidine phosphoribosyltransferase family. In terms of assembly, homodimer.

It is found in the cytoplasm. It catalyses the reaction AMP + diphosphate = 5-phospho-alpha-D-ribose 1-diphosphate + adenine. It participates in purine metabolism; AMP biosynthesis via salvage pathway; AMP from adenine: step 1/1. In terms of biological role, catalyzes a salvage reaction resulting in the formation of AMP, that is energically less costly than de novo synthesis. The chain is Adenine phosphoribosyltransferase from Pseudomonas fluorescens (strain SBW25).